The following is a 186-amino-acid chain: Mitoferrin-2A (186 aa).

The stretch at 75 to 163 (SNVTTHMLAG…FACYEKLKKT (89 aa)) is one Solcar repeat. A run of 3 helical transmembrane segments spans residues 77 to 96 (VTTH…CLMY), 137 to 157 (RGLN…FACY), and 172 to 185 (GNSH…YSCP).

Belongs to the mitochondrial carrier (TC 2.A.29) family.

The protein resides in the mitochondrion inner membrane. The enzyme catalyses Fe(2+)(in) = Fe(2+)(out). Functionally, mitochondrial iron transporter that mediates iron uptake. Probably required for heme synthesis of hemoproteins and Fe-S cluster assembly in non-erythroid cells. This Xenopus laevis (African clawed frog) protein is Mitoferrin-2A (slc25a28-a).